Reading from the N-terminus, the 930-residue chain is Isoleucine--tRNA ligase (930 aa).

A 'HIGH' region motif is present at residues 57 to 67 (PYANGNIHVGH). E554 contributes to the L-isoleucyl-5'-AMP binding site. The 'KMSKS' region motif lies at 595–599 (KMSKS). Residue K598 participates in ATP binding. Zn(2+) is bound by residues C888, C891, C908, and C911.

The protein belongs to the class-I aminoacyl-tRNA synthetase family. IleS type 1 subfamily. Monomer. Requires Zn(2+) as cofactor.

Its subcellular location is the cytoplasm. It catalyses the reaction tRNA(Ile) + L-isoleucine + ATP = L-isoleucyl-tRNA(Ile) + AMP + diphosphate. In terms of biological role, catalyzes the attachment of isoleucine to tRNA(Ile). As IleRS can inadvertently accommodate and process structurally similar amino acids such as valine, to avoid such errors it has two additional distinct tRNA(Ile)-dependent editing activities. One activity is designated as 'pretransfer' editing and involves the hydrolysis of activated Val-AMP. The other activity is designated 'posttransfer' editing and involves deacylation of mischarged Val-tRNA(Ile). The protein is Isoleucine--tRNA ligase of Streptococcus mutans serotype c (strain ATCC 700610 / UA159).